The following is a 119-amino-acid chain: Immunoglobulin lambda variable 2-11 (119 aa).

The N-terminal stretch at 1 to 19 is a signal peptide; that stretch reads MAWALLLLSLLTQGTGSWA. The residue at position 20 (Gln-20) is a Pyrrolidone carboxylic acid. The tract at residues 20–44 is framework-1; it reads QSALTQPRSVSGSPGQSVTISCTGT. The Ig-like domain maps to 20 to 119; that stretch reads QSALTQPRSV…CSYAGSYTFH (100 aa). A disulfide bridge links Cys-41 with Cys-109. A complementarity-determining-1 region spans residues 45–53; the sequence is SSDVGGYNY. The segment at 54–70 is framework-2; it reads VSWYQQHPGKAPKLMIY. Residues 71-73 are complementarity-determining-2; it reads DVS. A framework-3 region spans residues 74-109; it reads KRPSGVPDRFSGSKSGNTASLTISGLQAEDEADYYC. Positions 110–119 are complementarity-determining-3; that stretch reads CSYAGSYTFH.

Immunoglobulins are composed of two identical heavy chains and two identical light chains; disulfide-linked.

The protein localises to the secreted. Its subcellular location is the cell membrane. Its function is as follows. V region of the variable domain of immunoglobulin light chains that participates in the antigen recognition. Immunoglobulins, also known as antibodies, are membrane-bound or secreted glycoproteins produced by B lymphocytes. In the recognition phase of humoral immunity, the membrane-bound immunoglobulins serve as receptors which, upon binding of a specific antigen, trigger the clonal expansion and differentiation of B lymphocytes into immunoglobulins-secreting plasma cells. Secreted immunoglobulins mediate the effector phase of humoral immunity, which results in the elimination of bound antigens. The antigen binding site is formed by the variable domain of one heavy chain, together with that of its associated light chain. Thus, each immunoglobulin has two antigen binding sites with remarkable affinity for a particular antigen. The variable domains are assembled by a process called V-(D)-J rearrangement and can then be subjected to somatic hypermutations which, after exposure to antigen and selection, allow affinity maturation for a particular antigen. The polypeptide is Immunoglobulin lambda variable 2-11 (Homo sapiens (Human)).